A 489-amino-acid chain; its full sequence is Betaine aldehyde dehydrogenase (489 aa).

Positions 26 and 93 each coordinate K(+). Position 150 to 152 (Gly-150 to Trp-152) interacts with NAD(+). Residue Lys-162 is the Charge relay system of the active site. Residue Lys-176–Glu-179 coordinates NAD(+). Val-180 contributes to the K(+) binding site. Position 229-232 (Gly-229–Thr-232) interacts with NAD(+). Residue Leu-245 coordinates K(+). The Proton acceptor role is filled by Glu-251. Residues Gly-253, Cys-285, and Glu-386 each contribute to the NAD(+) site. The active-site Nucleophile is the Cys-285. At Cys-285 the chain carries Cysteine sulfenic acid (-SOH). Residues Lys-456 and Gly-459 each coordinate K(+). Glu-463 acts as the Charge relay system in catalysis.

It belongs to the aldehyde dehydrogenase family. Dimer of dimers. It depends on K(+) as a cofactor.

The enzyme catalyses betaine aldehyde + NAD(+) + H2O = glycine betaine + NADH + 2 H(+). The protein operates within amine and polyamine biosynthesis; betaine biosynthesis via choline pathway; betaine from betaine aldehyde: step 1/1. Functionally, involved in the biosynthesis of the osmoprotectant glycine betaine. Catalyzes the irreversible oxidation of betaine aldehyde to the corresponding acid. The polypeptide is Betaine aldehyde dehydrogenase (Burkholderia vietnamiensis (strain G4 / LMG 22486) (Burkholderia cepacia (strain R1808))).